A 1887-amino-acid polypeptide reads, in one-letter code: DNA-directed RNA polymerase II subunit RPB1 (1887 aa).

Residues Cys-67, Cys-70, Cys-77, His-80, Cys-107, Cys-110, Cys-150, and Cys-176 each contribute to the Zn(2+) site. A disordered region spans residues 156–178 (MDLTKENQQPDPNKKPGHGGCGH). Mg(2+) is bound by residues Asp-487, Asp-489, and Asp-491. Residues 825–837 (PSEFYFHAMGGRE) form a bridging helix region. Lys-1260 participates in a covalent cross-link: Glycyl lysine isopeptide (Lys-Gly) (interchain with G-Cter in ubiquitin). Disordered regions lie at residues 1528–1565 (TPGG…GPSM) and 1579–1887 (YSPT…ESED). Composition is skewed to low complexity over residues 1529-1565 (PGGP…GPSM), 1579-1610 (YSPT…PTSP), and 1626-1650 (PQST…PTVQ). Residues 1579 to 1585 (YSPTSPN) form repeat 1. The tract at residues 1579-1881 (YSPTSPNYTA…SPAYSPSSPT (303 aa)) is C-terminal domain (CTD); 32 X 7 AA approximate tandem repeats of Y-[ST]-P-[STNVAPGN]-[STGMA]-[PSTR]-[SNAGCQKTLRIMH]. The stretch at 1586–1592 (YTASSPG) is one 2; approximate repeat. Repeat copies occupy residues 1598 to 1604 (YSPSSPN), 1605 to 1611 (YSPTSPL), 1631 to 1637 (YSPSSSG), and 1638 to 1644 (YSPTSPV). The segment covering 1651–1664 (FQSSPSFAGSGSNI) has biased composition (polar residues). Over residues 1665–1760 (YSPGNAYSPS…GVKYSPTSPT (96 aa)) the composition is skewed to low complexity. A run of 17 repeats spans residues 1671 to 1677 (YSPSSSN), 1678 to 1684 (YSPNSPS), 1685 to 1691 (YSPTSPS), 1692 to 1698 (YSPSSPS), 1699 to 1705 (YSPTSPC), 1706 to 1712 (YSPTSPS), 1713 to 1719 (YSPTSPN), 1720 to 1726 (YTPVTPS), 1727 to 1733 (YSPTSPN), 1740 to 1746 (YSPASPA), 1754 to 1760 (YSPTSPT), 1761 to 1767 (YSPPSPS), 1777 to 1783 (YTPGSPQ), 1784 to 1790 (YSPASPK), 1791 to 1797 (YSPTSPL), 1798 to 1804 (YSPSSPQ), and 1811 to 1817 (YSPTGST). Polar residues predominate over residues 1776-1786 (QYTPGSPQYSP). Positions 1788–1813 (SPKYSPTSPLYSPSSPQHSPSNQYSP) are enriched in low complexity. Residues 1814-1831 (TGSTYSATSPRYSPNMSI) show a composition bias toward polar residues. The stretch at 1818–1824 (YSATSPR) is one 24; approximate repeat. Tandem repeats lie at residues 1825-1831 (YSPNMSI), 1832-1838 (YSPSSTK), 1839-1845 (YSPTSPT), 1846-1852 (YTPTARN), 1853-1859 (YSPTSPM), 1860-1866 (YSPTAPS), 1868-1874 (YSPTSPA), and 1875-1881 (YSPSSPT). Over residues 1832-1849 (YSPSSTKYSPTSPTYTPT) the composition is skewed to low complexity. The span at 1850–1859 (ARNYSPTSPM) shows a compositional bias: polar residues. Residues 1860-1881 (YSPTAPSHYSPTSPAYSPSSPT) are compositionally biased toward low complexity.

The protein belongs to the RNA polymerase beta' chain family. Component of the RNA polymerase II (Pol II) complex consisting of 12 subunits. The tandem 7 residues repeats in the C-terminal domain (CTD) can be highly phosphorylated. The phosphorylation activates Pol II. Phosphorylation occurs mainly at residues 'Ser-2' and 'Ser-5' of the heptapeptide repeat. The phosphorylation state is believed to result from the balanced action of site-specific CTD kinases and phosphatase, and a 'CTD code' that specifies the position of Pol II within the transcription cycle has been proposed. In terms of processing, following transcription stress, the elongating form of RNA polymerase II (RNA pol IIo) is polyubiquitinated via 'Lys-63'-linkages on Lys-1260 at DNA damage sites without leading to degradation: ubiquitination promotes RNA pol IIo backtracking to allow access by the transcription-coupled nucleotide excision repair (TC-NER) machinery. Subsequent DEF1-dependent polyubiquitination by the elongin complex via 'Lys-48'-linkages may lead to proteasome-mediated degradation; presumably at stalled RNA pol II where TC-NER has failed, to halt global transcription and enable 'last resort' DNA repair pathways.

Its subcellular location is the nucleus. It carries out the reaction RNA(n) + a ribonucleoside 5'-triphosphate = RNA(n+1) + diphosphate. DNA-dependent RNA polymerase catalyzes the transcription of DNA into RNA using the four ribonucleoside triphosphates as substrates. Largest and catalytic component of RNA polymerase II which synthesizes mRNA precursors and many functional non-coding RNAs. Forms the polymerase active center together with the second largest subunit. Pol II is the central component of the basal RNA polymerase II transcription machinery. It is composed of mobile elements that move relative to each other. RPB1 is part of the core element with the central large cleft, the clamp element that moves to open and close the cleft and the jaws that are thought to grab the incoming DNA template. At the start of transcription, a single-stranded DNA template strand of the promoter is positioned within the central active site cleft of Pol II. A bridging helix emanates from RPB1 and crosses the cleft near the catalytic site and is thought to promote translocation of Pol II by acting as a ratchet that moves the RNA-DNA hybrid through the active site by switching from straight to bent conformations at each step of nucleotide addition. During transcription elongation, Pol II moves on the template as the transcript elongates. Elongation is influenced by the phosphorylation status of the C-terminal domain (CTD) of Pol II largest subunit (RPB1), which serves as a platform for assembly of factors that regulate transcription initiation, elongation, termination and mRNA processing. This Drosophila melanogaster (Fruit fly) protein is DNA-directed RNA polymerase II subunit RPB1.